Reading from the N-terminus, the 705-residue chain is Catalase C (705 aa).

Residues 1-31 (MAKKPSAPNNTKPATIHDQKATRGNGGELHQ) form a disordered region. Catalysis depends on residues histidine 88 and asparagine 161. Heme is bound at residue tyrosine 375.

It belongs to the catalase family. HPII subfamily. Requires heme as cofactor.

It carries out the reaction 2 H2O2 = O2 + 2 H2O. In terms of biological role, decomposes hydrogen peroxide into water and oxygen; serves to protect cells from the toxic effects of hydrogen peroxide. Could protect cells in nodules which have a high potential to produce hydrogen peroxide because of the strong reducing conditions required for nitrogen fixation and the action of several proteins. The protein is Catalase C (katE) of Rhizobium meliloti (strain 1021) (Ensifer meliloti).